Reading from the N-terminus, the 229-residue chain is UPF0173 metal-dependent hydrolase SAR1785 (229 aa).

This sequence belongs to the UPF0173 family.

The chain is UPF0173 metal-dependent hydrolase SAR1785 from Staphylococcus aureus (strain MRSA252).